A 350-amino-acid polypeptide reads, in one-letter code: Phosphotriesterase-related protein (350 aa).

Residues H22, H24, E169, H201, H230, and D298 each coordinate a divalent metal cation.

It belongs to the metallo-dependent hydrolases superfamily. Phosphotriesterase family. The cofactor is a divalent metal cation.

This is Phosphotriesterase-related protein from Drosophila willistoni (Fruit fly).